A 108-amino-acid chain; its full sequence is Iron-sulfur cluster assembly protein CyaY (108 aa).

The protein belongs to the frataxin family.

Functionally, involved in iron-sulfur (Fe-S) cluster assembly. May act as a regulator of Fe-S biogenesis. The sequence is that of Iron-sulfur cluster assembly protein CyaY from Burkholderia orbicola (strain MC0-3).